A 1032-amino-acid chain; its full sequence is Kinesin heavy chain isoform 5A (1032 aa).

Ala2 is subject to N-acetylalanine. Residues 9–327 (SIKVLCRFRP…LMFGQRAKTI (319 aa)) enclose the Kinesin motor domain. 86–93 (GQTSSGKT) serves as a coordination point for ATP. Residues 174 to 315 (VSGPEEILDV…PSSYNDAETK (142 aa)) form a microtubule-binding region. A necessary for interaction with ZFYVE27 region spans residues 271 to 361 (EGTKSYVPYR…KTKAQKETIA (91 aa)). A coiled-coil region spans residues 331–906 (ASVNLELTAE…VDRIKEAVRY (576 aa)). Residues 353–1032 (TKAQKETIAK…FPLHQETAAS (680 aa)) form an interaction with BICD2 region. Residue Thr397 is modified to Phosphothreonine. The tract at residues 904-939 (VRYKSSGKRGHSAQIAKPVRPGHYPASSPTNPYGTR) is disordered. Positions 907–1032 (KSSGKRGHSA…FPLHQETAAS (126 aa)) are globular.

This sequence belongs to the TRAFAC class myosin-kinesin ATPase superfamily. Kinesin family. Kinesin subfamily. As to quaternary structure, oligomer composed of two heavy chains and two light chains. Interacts with GRIP1. Interacts with FMR1 (via C-terminus); this interaction is increased in a mGluR-dependent manner. Interacts with BORCS5. Interacts with ZFYVE27. Interacts with VAPA, VAPB, SURF4, RAB11A (GDP-bound form), RAB11B (GDP-bound form) and RTN3 in a ZFYVE27-dependent manner. Interacts with BICD2. Interacts with DTNB.

It is found in the cytoplasm. The protein localises to the perinuclear region. Its subcellular location is the cytoskeleton. The protein resides in the perikaryon. It catalyses the reaction ATP + H2O + a kinesin associated with a microtubule at position (n) = ADP + phosphate a kinesin associated with a microtubule at position (n+1, toward the plus end).. Microtubule-dependent motor required for slow axonal transport of neurofilament proteins (NFH, NFM and NFL). Can induce formation of neurite-like membrane protrusions in non-neuronal cells in a ZFYVE27-dependent manner. The ZFYVE27-KIF5A complex contributes to the vesicular transport of VAPA, VAPB, SURF4, RAB11A, RAB11B and RTN3 proteins in neurons. Required for anterograde axonal transportation of MAPK8IP3/JIP3 which is essential for MAPK8IP3/JIP3 function in axon elongation. This is Kinesin heavy chain isoform 5A (KIF5A) from Pongo abelii (Sumatran orangutan).